We begin with the raw amino-acid sequence, 239 residues long: tRNA (guanine-N(7)-)-methyltransferase (239 aa).

S-adenosyl-L-methionine contacts are provided by residues glycine 64, 87–88 (EI), 120–121 (NA), and leucine 140. Aspartate 143 is an active-site residue. 218–220 (SEE) lines the S-adenosyl-L-methionine pocket.

It belongs to the class I-like SAM-binding methyltransferase superfamily. TrmB family.

Its subcellular location is the nucleus. The catalysed reaction is guanosine(46) in tRNA + S-adenosyl-L-methionine = N(7)-methylguanosine(46) in tRNA + S-adenosyl-L-homocysteine. It functions in the pathway tRNA modification; N(7)-methylguanine-tRNA biosynthesis. Catalyzes the formation of N(7)-methylguanine at position 46 (m7G46) in tRNA. The protein is tRNA (guanine-N(7)-)-methyltransferase of Culex quinquefasciatus (Southern house mosquito).